Here is a 563-residue protein sequence, read N- to C-terminus: Eukaryotic translation initiation factor 3 subunit D-1 (563 aa).

The interval 98 to 167 (VQKPPHQRGR…GPPPKMRESS (70 aa)) is disordered. Basic residues predominate over residues 100–121 (KPPHQRGRFRNMRNSRSGRGRN). Residue Thr-128 is modified to Phosphothreonine. An RNA gate region spans residues 291–305 (EFDLLTVNETSVEPP).

Belongs to the eIF-3 subunit D family. As to quaternary structure, component of the eukaryotic translation initiation factor 3 (eIF-3) complex. The eIF-3 complex interacts with pix.

Its subcellular location is the cytoplasm. Its function is as follows. mRNA cap-binding component of the eukaryotic translation initiation factor 3 (eIF-3) complex, which is involved in protein synthesis of a specialized repertoire of mRNAs and, together with other initiation factors, stimulates binding of mRNA and methionyl-tRNAi to the 40S ribosome. The eIF-3 complex specifically targets and initiates translation of a subset of mRNAs involved in cell proliferation. In the eIF-3 complex, eif3d specifically recognizes and binds the 7-methylguanosine cap of a subset of mRNAs. In Drosophila mojavensis (Fruit fly), this protein is Eukaryotic translation initiation factor 3 subunit D-1.